Reading from the N-terminus, the 479-residue chain is U2 small nuclear ribonucleoprotein auxiliary factor 35 kDa subunit-related protein 1 (479 aa).

Residues 1 to 63 (MAALEKMTFP…EDTFIEEQQL (63 aa)) are disordered. Basic residues predominate over residues 20-37 (SHKKYRAALKKEKRKKRR). Residues 50–63 (QEEEEDTFIEEQQL) are compositionally biased toward acidic residues. A Glycyl lysine isopeptide (Lys-Gly) (interchain with G-Cter in SUMO2) cross-link involves residue Lys-67. A C3H1-type 1 zinc finger spans residues 171–199 (EKDRANCPFYSKTGACRFGDRCSRKHNFP). The region spanning 203–309 (PTLLIKSMFT…RQLQCEFCPV (107 aa)) is the RRM domain. The C3H1-type 2 zinc-finger motif lies at 311-338 (RWKMAICGLFEIQQCPRGKHCNFLHVFR). The residue at position 354 (Ser-354) is a Phosphoserine. The tract at residues 356-479 (DQTGSSFGKN…DRTVQSPQSK (124 aa)) is disordered. 2 stretches are compositionally biased toward basic and acidic residues: residues 365–379 (NSER…DHYY) and 388–403 (PSPD…SERK). A Phosphoserine modification is found at Ser-389. 2 stretches are compositionally biased toward basic residues: residues 404-417 (KSSH…KRTS) and 442-451 (SQSRRSHRSR).

It is found in the nucleus. This chain is U2 small nuclear ribonucleoprotein auxiliary factor 35 kDa subunit-related protein 1, found in Homo sapiens (Human).